The primary structure comprises 274 residues: Large ribosomal subunit protein uL2 (274 aa).

The disordered stretch occupies residues 222-257; it reads GVAMNPVDHPHGGGEGRTSGGRHPVSPWGVPTKGYK.

This sequence belongs to the universal ribosomal protein uL2 family. As to quaternary structure, part of the 50S ribosomal subunit. Forms a bridge to the 30S subunit in the 70S ribosome.

In terms of biological role, one of the primary rRNA binding proteins. Required for association of the 30S and 50S subunits to form the 70S ribosome, for tRNA binding and peptide bond formation. It has been suggested to have peptidyltransferase activity; this is somewhat controversial. Makes several contacts with the 16S rRNA in the 70S ribosome. In Nitrosococcus oceani (strain ATCC 19707 / BCRC 17464 / JCM 30415 / NCIMB 11848 / C-107), this protein is Large ribosomal subunit protein uL2.